A 308-amino-acid chain; its full sequence is MSVGVAVLGSGNIGTDLMIKVLRLSDSLRMVAMAGIDPDSDGLARARRLGVTTTAEGVAGLVALPEFADVALVFDATSAGAHRHHDAVLRAHGRTVVDLTPAAVGPYVVPPVNLDEHLRETNVNMVTCGGQATVPIVAAVGRVTPVTYGEIVASIAAKSAGPGTRANIDEFTETTARAIEVVGGAELGKAIIVLNPADPPLLMRDTVYCLCPDTDADRSAIAAAIADMVRAVQEYVPGYCLKQDVQFDRVDSYLPALGRRLTGLQVSTFLEVSGAGHYLPTYAGNLDIMTSAALRTAERLIARRAVTA.

An NAD(+)-binding site is contributed by 10-13 (SGNI). Cys128 serves as the catalytic Acyl-thioester intermediate. NAD(+) contacts are provided by residues 159–167 (SAGPGTRAN) and Asn285.

It belongs to the acetaldehyde dehydrogenase family.

It catalyses the reaction acetaldehyde + NAD(+) + CoA = acetyl-CoA + NADH + H(+). In Salinispora tropica (strain ATCC BAA-916 / DSM 44818 / JCM 13857 / NBRC 105044 / CNB-440), this protein is Acetaldehyde dehydrogenase.